Here is a 294-residue protein sequence, read N- to C-terminus: Putative pyruvate, phosphate dikinase regulatory protein (294 aa).

Residue 156 to 163 coordinates ADP; the sequence is GVSRSGKT.

It belongs to the pyruvate, phosphate/water dikinase regulatory protein family. PDRP subfamily.

The enzyme catalyses N(tele)-phospho-L-histidyl/L-threonyl-[pyruvate, phosphate dikinase] + ADP = N(tele)-phospho-L-histidyl/O-phospho-L-threonyl-[pyruvate, phosphate dikinase] + AMP + H(+). It carries out the reaction N(tele)-phospho-L-histidyl/O-phospho-L-threonyl-[pyruvate, phosphate dikinase] + phosphate + H(+) = N(tele)-phospho-L-histidyl/L-threonyl-[pyruvate, phosphate dikinase] + diphosphate. Its function is as follows. Bifunctional serine/threonine kinase and phosphorylase involved in the regulation of the pyruvate, phosphate dikinase (PPDK) by catalyzing its phosphorylation/dephosphorylation. This chain is Putative pyruvate, phosphate dikinase regulatory protein, found in Cutibacterium acnes (strain DSM 16379 / KPA171202) (Propionibacterium acnes).